A 313-amino-acid polypeptide reads, in one-letter code: HPr kinase/phosphorylase (313 aa).

Active-site residues include His140 and Lys161. 155 to 162 (GNSGAGKS) lines the ATP pocket. Residue Ser162 coordinates Mg(2+). Asp179 acts as the Proton acceptor; for phosphorylation activity. Proton donor; for dephosphorylation activity in catalysis. An important for the catalytic mechanism of both phosphorylation and dephosphorylation region spans residues 203 to 212 (IEVRGLGILN). Glu204 contacts Mg(2+). Arg246 is a catalytic residue. Residues 267 to 272 (PVAAGR) form an important for the catalytic mechanism of dephosphorylation region.

This sequence belongs to the HPrK/P family. As to quaternary structure, homohexamer. It depends on Mg(2+) as a cofactor.

The catalysed reaction is [HPr protein]-L-serine + ATP = [HPr protein]-O-phospho-L-serine + ADP + H(+). The enzyme catalyses [HPr protein]-O-phospho-L-serine + phosphate + H(+) = [HPr protein]-L-serine + diphosphate. Catalyzes the ATP- as well as the pyrophosphate-dependent phosphorylation of a specific serine residue in HPr, a phosphocarrier protein of the phosphoenolpyruvate-dependent sugar phosphotransferase system (PTS). HprK/P also catalyzes the pyrophosphate-producing, inorganic phosphate-dependent dephosphorylation (phosphorolysis) of seryl-phosphorylated HPr (P-Ser-HPr). The sequence is that of HPr kinase/phosphorylase from Azoarcus sp. (strain BH72).